Here is a 677-residue protein sequence, read N- to C-terminus: Regulator of G-protein signaling 9 (677 aa).

In terms of domain architecture, DEP spans 30 to 105; that stretch reads PETGVRMQNQ…PDSSLYRFQT (76 aa). The G protein gamma domain maps to 219–280; that stretch reads VTAVRKEIMY…ITDDTQFWDL (62 aa). Residues 295–416 enclose the RGS domain; it reads RWAFNFSELI…SPIYKEMLAK (122 aa). 2 disordered regions span residues 530–571 and 639–677; these read SSGL…RAPL and DSGP…GKAG.

As to quaternary structure, heterodimer with GNB5. Interacts with RGS7BP, leading to regulate the subcellular location of the heterodimer formed with GNB5. Component of the RGS9-1-Gbeta5 complex composed of RGS9 (RGS9-1), Gbeta5 (GNB5) and RGS9BP. Interacts with PDE6G and GNAT1. Expressed in the central nervous system. Isoform RGS9L is found in striatum, hypothalamus and nucleus accumbens while isoform RGS9S is expressed in retina and pineal gland.

Its subcellular location is the membrane. Inhibits signal transduction by increasing the GTPase activity of G protein alpha subunits thereby driving them into their inactive GDP-bound form. Binds to GNAT1. Involved in phototransduction; key element in the recovery phase of visual transduction. This chain is Regulator of G-protein signaling 9 (Rgs9), found in Rattus norvegicus (Rat).